The primary structure comprises 239 residues: tRNA (guanine-N(1)-)-methyltransferase (239 aa).

S-adenosyl-L-methionine-binding positions include Gly-109 and 128 to 133 (IGDYVL).

It belongs to the RNA methyltransferase TrmD family. In terms of assembly, homodimer.

It localises to the cytoplasm. The enzyme catalyses guanosine(37) in tRNA + S-adenosyl-L-methionine = N(1)-methylguanosine(37) in tRNA + S-adenosyl-L-homocysteine + H(+). In terms of biological role, specifically methylates guanosine-37 in various tRNAs. This is tRNA (guanine-N(1)-)-methyltransferase from Thermus thermophilus (strain ATCC 27634 / DSM 579 / HB8).